Here is a 341-residue protein sequence, read N- to C-terminus: D-aspartate oxidase (341 aa).

FAD-binding residues include aspartate 36, lysine 37, threonine 43, serine 44, methionine 50, glycine 307, isoleucine 311, and serine 312. The Microbody targeting signal motif lies at serine 339–leucine 341.

The protein belongs to the DAMOX/DASOX family. Monomer. Interacts with PEX5; the interaction is direct and required for localization of DDO to the peroxisome. Interacts with DAOA; the interaction is direct and increases the degradation rate of DDO. It depends on FAD as a cofactor. Post-translationally, may be S-nitrosylated. In terms of tissue distribution, expressed in epithelial cells of the proximal nephron tubules in the renal cortex (at protein level). In the brain, expressed in the frontal, temporal, and occipital lobes of the cortex, hippocampus, striatum, diencephalon, brainstem, cerebellum, spinal cord, plexus choroiderus and ependyma (at protein level). Expression is increased in the prefrontal cortex of schizophrenic patients. Levels are normal in the superior frontal gyrus of patients with Alzheimer's disease.

Its subcellular location is the peroxisome matrix. The protein resides in the cytoplasm. The protein localises to the cytosol. It carries out the reaction D-aspartate + O2 + H2O = oxaloacetate + H2O2 + NH4(+). The catalysed reaction is D-glutamate + O2 + H2O = H2O2 + 2-oxoglutarate + NH4(+). Its activity is regulated as follows. Inhibited by the benzodiazepine olanzapine. Inhibited by aminooxyacetic acid, thiolactomycin, malonate and meso-tartrate. Clozapine, haloperidol and chlorpromazine have no effect on activity. Not inhibited by sodium, potassium, magnesium, iron, calcium, cobalt, copper, nickel, manganese or zinc ions. Not inhibited by AMP, ADP, ATP, or cAMP. Not inhibited by pyridoxal 5'-phosphate. Functionally, selectively catalyzes the oxidative deamination of acidic amino acids. Suppresses the level of D-aspartate in the brain, an amino acid that can act as an agonist for glutamate receptors. Protects the organism from the toxicity of D-amino acids. May also function in the intestine. In Homo sapiens (Human), this protein is D-aspartate oxidase (DDO).